The following is a 351-amino-acid chain: V-type proton ATPase subunit d1 (351 aa).

It belongs to the V-ATPase V0D/AC39 subunit family. V-ATPase is a heteromultimeric enzyme composed of a peripheral catalytic V1 complex (components A to H) attached to an integral membrane V0 proton pore complex (components: a, c, c'', d and e).

It is found in the vacuole membrane. In terms of biological role, subunit of the integral membrane V0 complex of vacuolar ATPase. Vacuolar ATPase is responsible for acidifying a variety of intracellular compartments in eukaryotic cells, thus providing most of the energy required for transport processes in the vacuolar system. The protein is V-type proton ATPase subunit d1 (VHA-d1) of Arabidopsis thaliana (Mouse-ear cress).